The following is a 434-amino-acid chain: MEMSELLASEVVSSGPDYAKKSVDGLNMTAANGTNDTLMTLDEYLNKSLPLHLEQLILDANQKELFDSAAKSLLSSTLLAKQQQSLQIAPIQPQSSFSSQSFAEGLIVGQLSVIVALIFVIKFFVFSEGGTKTATAKSVGSASSFMDSTKNSILSTIIKRGGKDGLEVDDKDNEKSRQINSILEKTYYNVETHSPESLDWFNVLIAQTIHQFREEALQKNNILNSLNDFIERRSNELPQYLDQIKITEVDIGDDFPIFSNCIIQYSPNSNKKRLEAKIDIDLSDRLALGIETKLLLNYPKPFSAALPIKLTVSIVRFQACLTVSLTTDEQFVPTSEETNDDEMGNDKGYYLMFSFNPEYRMELEVKSLIGARSKLENIPKIASLIEYQISKWFVERCVEPRFQFVKLPSMWPRSKNTRKEKTDTDDSVSVKSND.

The Lumenal segment spans residues 1-105 (MEMSELLASE…SFSSQSFAEG (105 aa)). Residues 106 to 126 (LIVGQLSVIVALIFVIKFFVF) traverse the membrane as a helical segment. Over 127 to 434 (SEGGTKTATA…DDSVSVKSND (308 aa)) the chain is Cytoplasmic. The SMP-LTD domain maps to 194–408 (SPESLDWFNV…EPRFQFVKLP (215 aa)). The interval 415 to 434 (KNTRKEKTDTDDSVSVKSND) is disordered.

The protein belongs to the MMM1 family. In terms of assembly, homodimer. Component of the ER-mitochondria encounter structure (ERMES) or MDM complex, composed of MMM1, MDM10, MDM12 and MDM34. An MMM1 homodimer associates with one molecule of MDM12 on each side in a pairwise head-to-tail manner, and the SMP-LTD domains of MMM1 and MDM12 generate a continuous hydrophobic tunnel for phospholipid trafficking.

It is found in the endoplasmic reticulum membrane. In terms of biological role, component of the ERMES/MDM complex, which serves as a molecular tether to connect the endoplasmic reticulum (ER) and mitochondria. Components of this complex are involved in the control of mitochondrial shape and protein biogenesis, and function in nonvesicular lipid trafficking between the ER and mitochondria. The MDM12-MMM1 subcomplex functions in the major beta-barrel assembly pathway that is responsible for biogenesis of all outer membrane beta-barrel proteins, and acts in a late step after the SAM complex. The MDM10-MDM12-MMM1 subcomplex further acts in the TOM40-specific pathway after the action of the MDM12-MMM1 complex. Essential for establishing and maintaining the structure of mitochondria and maintenance of mtDNA nucleoids. This is Maintenance of mitochondrial morphology protein 1 from Kluyveromyces lactis (strain ATCC 8585 / CBS 2359 / DSM 70799 / NBRC 1267 / NRRL Y-1140 / WM37) (Yeast).